The chain runs to 253 residues: Chloride intracellular channel protein 4 (253 aa).

Alanine 2 is modified (N-acetylalanine). The interval 2 to 101 is required for insertion into the membrane; the sequence is ALSMPLNGLK…EEFLEEVLCP (100 aa). Serine 4 carries the phosphoserine modification. Lysine 24 carries the N6-acetyllysine modification. Positions 35–38 match the G-site motif; the sequence is CPFS. Residues 37 to 57 form a helical membrane-spanning segment; it reads FSQRLFMILWLKGVVFSVTTV. The GST C-terminal domain maps to 81–244; that stretch reads NSEVKTDVNK…PSDKEVEIAY (164 aa). Lysine 130 carries the post-translational modification N6-acetyllysine. 3 positions are modified to phosphoserine: serine 132, serine 167, and serine 236. Tyrosine 244 carries the post-translational modification Phosphotyrosine.

This sequence belongs to the chloride channel CLIC family. Monomer. Interacts with HRH3. Detected in brain, in cell bodies and dendrites of Purkinje cells in cerebellar neurons (at protein level). Expressed neonatal and adult cardiomyocytes (at protein level). Marked expression was found in hippocampus and cerebellum, and in many other tissues.

The protein resides in the cytoplasm. The protein localises to the cytoskeleton. It is found in the microtubule organizing center. Its subcellular location is the centrosome. It localises to the cytoplasmic vesicle membrane. The protein resides in the nucleus. The protein localises to the cell membrane. It is found in the mitochondrion. Its subcellular location is the cell junction. It localises to the endoplasmic reticulum membrane. The catalysed reaction is chloride(in) = chloride(out). It carries out the reaction thiocyanate(in) = thiocyanate(out). The enzyme catalyses nitrate(in) = nitrate(out). It catalyses the reaction iodide(out) = iodide(in). The catalysed reaction is bromide(in) = bromide(out). It carries out the reaction fluoride(in) = fluoride(out). The enzyme catalyses choline(out) = choline(in). With respect to regulation, channel activity is redox- and pH-regulated. Anion vs cation selectivity is enhanced when fully oxidized. In terms of biological role, in the soluble state, catalyzes glutaredoxin-like thiol disulfide exchange reactions with reduced glutathione as electron donor. Can insert into membranes and form voltage-dependent multi-ion conductive channels. Membrane insertion seems to be redox-regulated and may occur only under oxidizing conditions. Has alternate cellular functions like a potential role in angiogenesis or in maintaining apical-basolateral membrane polarity during mitosis and cytokinesis. Could also promote endothelial cell proliferation and regulate endothelial morphogenesis (tubulogenesis). Promotes cell-surface expression of HRH3. The polypeptide is Chloride intracellular channel protein 4 (Clic4) (Rattus norvegicus (Rat)).